The primary structure comprises 376 residues: Heat stress transcription factor A-2a (376 aa).

Residues 137-168 form a disordered region; the sequence is LKTIKRRRPPPSSPPSSSSSSSSSQHQQQPAA. Residues 151–160 are compositionally biased toward low complexity; sequence PSSSSSSSSS. Residues 182–229 are a coiled coil; the sequence is VNRLQRDKSVLIAEVVKLRQEQQTTRAQMQAMEERISAAEQKQQQMTV. A hydrophobic repeat HR-A/B region spans residues 185–235; sequence LQRDKSVLIAEVVKLRQEQQTTRAQMQAMEERISAAEQKQQQMTVFLARAM. The Nuclear localization signal motif lies at 265–269; sequence KKRRR. 2 disordered regions span residues 296 to 319 and 332 to 362; these read VAEPDGDTTPRGDGGGGGGGDTES and KQREDGVAGGVQESNSGGADVDNDEEDDDDD. Residues 307–316 are compositionally biased toward gly residues; it reads GDGGGGGGGD. Positions 318–325 match the AHA motif; it reads ESFWMQLL. Acidic residues predominate over residues 352–362; that stretch reads VDNDEEDDDDD. The Nuclear export signal motif lies at 366–373; it reads LVQSIYHL.

The protein belongs to the HSF family. Class A subfamily. As to quaternary structure, homotrimer. Post-translationally, exhibits temperature-dependent phosphorylation.

It is found in the cytoplasm. The protein resides in the nucleus. Its function is as follows. Transcriptional regulator that specifically binds DNA of heat shock promoter elements (HSE). The chain is Heat stress transcription factor A-2a (HSFA2A) from Oryza sativa subsp. japonica (Rice).